A 790-amino-acid polypeptide reads, in one-letter code: IQ motif and ubiquitin-like domain-containing protein (790 aa).

Positions 1-17 (MSNQPKKYETQNIANST) are enriched in polar residues. A disordered region spans residues 1-49 (MSNQPKKYETQNIANSTEESDAFDIVTIPVPSEEPQESDQTEEHESGIE). Residues 130 to 206 (ATVKVVLIPV…IQVEIFSTNP (77 aa)) enclose the Ubiquitin-like domain. An IQ domain is found at 337 to 366 (RLKAVIVIQTYYRQWHAKIFVEDLRRQKSL).

In terms of assembly, component of the axonemal radial spoke 1 (RS1) complex, at least composed of spoke head proteins RSPH1, RSPH3, RSPH9 and the cilia-specific component RSPH4A or sperm-specific component RSPH6A, spoke stalk proteins RSPH14, DNAJB13, DYDC1, ROPN1L and NME5, and the anchor protein IQUB. Does not appear to be part of radial spoke complexes 2 or 3 (RS2 or RS3). Interacts with CALM1. Interacts with DNAJB13. Interacts with DYNLL2. Interacts with NME5. Interacts with RSPH3. Interacts with RSPH9. Interacts with ZMYND10. Interacts with calmodulin; the interaction occurs in conditions of low but not high calcium.

It is found in the cytoplasm. The protein resides in the cytoskeleton. It localises to the flagellum axoneme. The protein localises to the cell projection. Its subcellular location is the cilium. Adapter protein that anchors the radial spoke 1 (RS1) complex to the A microtubule of outer doublet microtubules in axonemes. The triple radial spokes (RS1, RS2 and RS3) are required to modulate beating of the sperm flagellum. May play a role in inhibiting signaling via MAPK1/ERK2 and MAPK3/ERK1. Additionally, may play a role in the functioning of cilia. Not required for the functioning of tracheal or ependymal cilia. The sequence is that of IQ motif and ubiquitin-like domain-containing protein (IQUB) from Macaca fascicularis (Crab-eating macaque).